The primary structure comprises 319 residues: Protein-methionine methyltransferase laeA (319 aa).

The disordered stretch occupies residues 269–293 (REPQSGTCSVQRENGANGDRSTLSA). Positions 270–293 (EPQSGTCSVQRENGANGDRSTLSA) are enriched in polar residues.

Belongs to the methyltransferase superfamily. LaeA methyltransferase family. In terms of assembly, component of the heterotrimeric velvet complex composed of laeA, veA and velB; VeA acting as a bridging protein between laeA and velB.

The protein resides in the nucleus. It catalyses the reaction L-methionyl-[protein] + S-adenosyl-L-methionine = S-methyl-L-methionyl-[protein] + S-adenosyl-L-homocysteine. Its function is as follows. Methyltransferase; component of the velvet transcription factor complex that acts as a global regulator for secondary metabolite gene expression. Controls the expression of the chaetoglobosin A biosynthesis cluster via the cheR transcription factor and the subsequent production of chaetoglobosin A. Positively regulates the expression of smtA and negatively regulates the expression of velB. LaeA also regulates pigmentation and spores production. In Chaetomium globosum (strain ATCC 6205 / CBS 148.51 / DSM 1962 / NBRC 6347 / NRRL 1970) (Soil fungus), this protein is Protein-methionine methyltransferase laeA.